Here is a 153-residue protein sequence, read N- to C-terminus: Endoribonuclease YbeY (153 aa).

Residues His-116, His-120, and His-126 each coordinate Zn(2+).

Belongs to the endoribonuclease YbeY family. Zn(2+) serves as cofactor.

Its subcellular location is the cytoplasm. Functionally, single strand-specific metallo-endoribonuclease involved in late-stage 70S ribosome quality control and in maturation of the 3' terminus of the 16S rRNA. The polypeptide is Endoribonuclease YbeY (Paraburkholderia phymatum (strain DSM 17167 / CIP 108236 / LMG 21445 / STM815) (Burkholderia phymatum)).